Consider the following 216-residue polypeptide: Probable nicotinate-nucleotide adenylyltransferase (216 aa).

Belongs to the NadD family.

The catalysed reaction is nicotinate beta-D-ribonucleotide + ATP + H(+) = deamido-NAD(+) + diphosphate. Its pathway is cofactor biosynthesis; NAD(+) biosynthesis; deamido-NAD(+) from nicotinate D-ribonucleotide: step 1/1. Functionally, catalyzes the reversible adenylation of nicotinate mononucleotide (NaMN) to nicotinic acid adenine dinucleotide (NaAD). This is Probable nicotinate-nucleotide adenylyltransferase from Shewanella pealeana (strain ATCC 700345 / ANG-SQ1).